A 330-amino-acid polypeptide reads, in one-letter code: ATP-dependent (S)-NAD(P)H-hydrate dehydratase (330 aa).

The region spanning 36–327 (VIPLVRNTIP…QEINSAFKKL (292 aa)) is the YjeF C-terminal domain. (6S)-NADPHX contacts are provided by residues Gly-136 and 189–195 (NFMEFTR). Residues 229-233 (KGEED) and 248-257 (GSGRRCGGQG) each bind ATP. A (6S)-NADPHX-binding site is contributed by Asp-258.

The protein belongs to the NnrD/CARKD family. Mg(2+) serves as cofactor.

It catalyses the reaction (6S)-NADHX + ATP = ADP + phosphate + NADH + H(+). It carries out the reaction (6S)-NADPHX + ATP = ADP + phosphate + NADPH + H(+). Its function is as follows. Catalyzes the dehydration of the S-form of NAD(P)HX at the expense of ATP, which is converted to ADP. Together with NAD(P)HX epimerase, which catalyzes the epimerization of the S- and R-forms, the enzyme allows the repair of both epimers of NAD(P)HX, a damaged form of NAD(P)H that is a result of enzymatic or heat-dependent hydration. This chain is ATP-dependent (S)-NAD(P)H-hydrate dehydratase, found in Danio rerio (Zebrafish).